Reading from the N-terminus, the 175-residue chain is Transcriptional repressor NrdR (175 aa).

A zinc finger lies at 3–32 (CPYCSHPDTKVIDSRDVDDGVRRRRECVVC). In terms of domain architecture, ATP-cone spans 47–137 (LFVVKKDQRR…VYREFTDITQ (91 aa)).

Belongs to the NrdR family. It depends on Zn(2+) as a cofactor.

In terms of biological role, negatively regulates transcription of bacterial ribonucleotide reductase nrd genes and operons by binding to NrdR-boxes. This Dehalococcoides mccartyi (strain ATCC BAA-2266 / KCTC 15142 / 195) (Dehalococcoides ethenogenes (strain 195)) protein is Transcriptional repressor NrdR.